The following is a 119-amino-acid chain: Ribosome-binding factor A (119 aa).

Belongs to the RbfA family. In terms of assembly, monomer. Binds 30S ribosomal subunits, but not 50S ribosomal subunits or 70S ribosomes.

The protein localises to the cytoplasm. In terms of biological role, one of several proteins that assist in the late maturation steps of the functional core of the 30S ribosomal subunit. Associates with free 30S ribosomal subunits (but not with 30S subunits that are part of 70S ribosomes or polysomes). Required for efficient processing of 16S rRNA. May interact with the 5'-terminal helix region of 16S rRNA. The chain is Ribosome-binding factor A from Coxiella burnetii (strain CbuK_Q154) (Coxiella burnetii (strain Q154)).